The sequence spans 24 residues: KTXATLFPGHGIGPEIXQAVXPIL.

The chain is Unknown protein NF004 from 2D-PAGE from Naegleria fowleri (Brain eating amoeba).